The following is a 344-amino-acid chain: tRNA N6-adenosine threonylcarbamoyltransferase (344 aa).

Residues His-111 and His-115 each coordinate Fe cation. Substrate is bound by residues 133-137 (LVSGG), Asp-166, Gly-179, and Asn-283. Asp-311 serves as a coordination point for Fe cation.

It belongs to the KAE1 / TsaD family. It depends on Fe(2+) as a cofactor.

The protein resides in the cytoplasm. It carries out the reaction L-threonylcarbamoyladenylate + adenosine(37) in tRNA = N(6)-L-threonylcarbamoyladenosine(37) in tRNA + AMP + H(+). Its function is as follows. Required for the formation of a threonylcarbamoyl group on adenosine at position 37 (t(6)A37) in tRNAs that read codons beginning with adenine. Is involved in the transfer of the threonylcarbamoyl moiety of threonylcarbamoyl-AMP (TC-AMP) to the N6 group of A37, together with TsaE and TsaB. TsaD likely plays a direct catalytic role in this reaction. This Orientia tsutsugamushi (strain Ikeda) (Rickettsia tsutsugamushi) protein is tRNA N6-adenosine threonylcarbamoyltransferase.